Reading from the N-terminus, the 89-residue chain is Small ribosomal subunit protein bS20 (89 aa).

A disordered region spans residues 68–89 (PNKGARKSSRLDHFVNEQKSKQ). Residues 76 to 89 (SRLDHFVNEQKSKQ) show a composition bias toward basic and acidic residues.

The protein belongs to the bacterial ribosomal protein bS20 family.

Functionally, binds directly to 16S ribosomal RNA. The sequence is that of Small ribosomal subunit protein bS20 from Mycoplasmopsis agalactiae (strain NCTC 10123 / CIP 59.7 / PG2) (Mycoplasma agalactiae).